A 381-amino-acid polypeptide reads, in one-letter code: Protein COS6 (381 aa).

Residues 1–42 (MKENELKNEKSVDVLSVKQLESQKTVLPQDLFRSSFTWFCYE) lie on the Cytoplasmic side of the membrane. A helical transmembrane segment spans residues 43-63 (IYKSLVFRIWMLLWLPLSVWW). Residues 64–69 (KLSNNW) lie on the Extracellular side of the membrane. A helical membrane pass occupies residues 70-90 (IYPLMVSLLVLFWGPVFVLVI). Topologically, residues 91–381 (FRLSRKRSLS…QLSCSEESLA (291 aa)) are cytoplasmic.

It belongs to the DUP/COS family.

Its subcellular location is the membrane. The sequence is that of Protein COS6 (COS6) from Saccharomyces cerevisiae (strain ATCC 204508 / S288c) (Baker's yeast).